The chain runs to 485 residues: Poly(ADP-ribose) glycohydrolase 2 (485 aa).

The protein belongs to the poly(ADP-ribose) glycohydrolase family. As to expression, expressed in head and tail neurons.

It is found in the cytoplasm. It carries out the reaction [(1''-&gt;2')-ADP-alpha-D-ribose](n) + H2O = [(1''-&gt;2')-ADP-alpha-D-ribose](n-1) + ADP-D-ribose. Poly(ADP-ribose) synthesized after DNA damage is only present transiently and is rapidly degraded by poly(ADP-ribose) glycohydrolase. Poly(ADP-ribose) metabolism may be required for maintenance of the normal function of neuronal cells. The protein is Poly(ADP-ribose) glycohydrolase 2 of Caenorhabditis elegans.